A 62-amino-acid chain; its full sequence is UPF0337 protein XAC0100 (62 aa).

The protein belongs to the UPF0337 (CsbD) family.

In Xanthomonas axonopodis pv. citri (strain 306), this protein is UPF0337 protein XAC0100.